The following is a 171-amino-acid chain: Large ribosomal subunit protein bL17 (171 aa).

Residues 140 to 152 (KREIQTKAREEKR) show a composition bias toward basic and acidic residues. The segment at 140-171 (KREIQTKAREEKRATRKSNSAPVNKETTSKKK) is disordered. A compositionally biased stretch (polar residues) spans 156-165 (KSNSAPVNKE).

It belongs to the bacterial ribosomal protein bL17 family. Part of the 50S ribosomal subunit. Contacts protein L32.

The protein is Large ribosomal subunit protein bL17 of Leptospira interrogans serogroup Icterohaemorrhagiae serovar Lai (strain 56601).